Here is an 86-residue protein sequence, read N- to C-terminus: UPF0297 protein LSL_1110 (86 aa).

This sequence belongs to the UPF0297 family.

The polypeptide is UPF0297 protein LSL_1110 (Ligilactobacillus salivarius (strain UCC118) (Lactobacillus salivarius)).